The sequence spans 101 residues: Apolipoprotein C-II (101 aa).

The signal sequence occupies residues 1–22; it reads MGTRYLLVLLLVLLVLGFEVQG. A lipid binding region spans residues 66–74; it reads TMDEKIRDI. The lipoprotein lipase cofactor stretch occupies residues 78-101; it reads STAAVSTYAGIFTDQLLSMLKGDS.

This sequence belongs to the apolipoprotein C2 family. Post-translationally, proapolipoprotein C-II is synthesized as a sialic acid containing glycoprotein which is subsequently desialylated prior to its proteolytic processing. In terms of processing, proapolipoprotein C-II, the major form found in plasma undergoes proteolytic cleavage of its N-terminal hexapeptide to generate apolipoprotein C-II, which occurs as the minor form in plasma. As to expression, highly expressed in the liver. Moderately expressed in the ileum, jejunum and ovary.

The protein resides in the secreted. Functionally, component of chylomicrons, very low-density lipoproteins (VLDL), low-density lipoproteins (LDL), and high-density lipoproteins (HDL) in plasma. Plays an important role in lipoprotein metabolism as an activator of lipoprotein lipase. Both proapolipoprotein C-II and apolipoprotein C-II can activate lipoprotein lipase. This is Apolipoprotein C-II (APOC2) from Canis lupus familiaris (Dog).